Reading from the N-terminus, the 173-residue chain is 2-C-methyl-D-erythritol 2,4-cyclodiphosphate synthase (173 aa).

Residues D17 and H19 each contribute to the a divalent metal cation site. 4-CDP-2-C-methyl-D-erythritol 2-phosphate-binding positions include 17–19 (DVH) and 49–50 (HS). H57 provides a ligand contact to a divalent metal cation. 4-CDP-2-C-methyl-D-erythritol 2-phosphate is bound by residues 76–80 (FPNTD), 147–150 (TTTE), and R157.

Belongs to the IspF family. In terms of assembly, homotrimer. A divalent metal cation serves as cofactor.

The enzyme catalyses 4-CDP-2-C-methyl-D-erythritol 2-phosphate = 2-C-methyl-D-erythritol 2,4-cyclic diphosphate + CMP. Its pathway is isoprenoid biosynthesis; isopentenyl diphosphate biosynthesis via DXP pathway; isopentenyl diphosphate from 1-deoxy-D-xylulose 5-phosphate: step 4/6. Involved in the biosynthesis of isopentenyl diphosphate (IPP) and dimethylallyl diphosphate (DMAPP), two major building blocks of isoprenoid compounds. Catalyzes the conversion of 4-diphosphocytidyl-2-C-methyl-D-erythritol 2-phosphate (CDP-ME2P) to 2-C-methyl-D-erythritol 2,4-cyclodiphosphate (ME-CPP) with a corresponding release of cytidine 5-monophosphate (CMP). The chain is 2-C-methyl-D-erythritol 2,4-cyclodiphosphate synthase from Ehrlichia ruminantium (strain Gardel).